The sequence spans 269 residues: Bis(5'-nucleosyl)-tetraphosphatase, symmetrical (269 aa).

This sequence belongs to the Ap4A hydrolase family.

It catalyses the reaction P(1),P(4)-bis(5'-adenosyl) tetraphosphate + H2O = 2 ADP + 2 H(+). In terms of biological role, hydrolyzes diadenosine 5',5'''-P1,P4-tetraphosphate to yield ADP. The polypeptide is Bis(5'-nucleosyl)-tetraphosphatase, symmetrical (Vibrio vulnificus (strain CMCP6)).